Here is a 370-residue protein sequence, read N- to C-terminus: MPVKIKIEKKEKHTRARLGKLTTPHGEVETPIFMPVGTQATVKTMTPEEVKETGGRLVLSNTYHLYLRPGHDLVKEAGGLHKFMNWDGPILTDSGGFQVFSLGPLRTITEEGVEFRSHIDGSKHFFTPEKVMEIEQALGADIAMAFDECAPYPCEKEYAVAALERTTRWAERCKRVHKREDQALFGIIQGGVFPDLRERSAKELLAMDFPGYGIGGLSVGEPKELMYEVLDQLMPIMPEDKPRYLMGVGSPDCLIEGVVRGVDMFDCVLPTRIARNGTVFTHNGKLTVRNAEYARDFRPMDQQCDCYACRNYSRAYIRHLIKTDEILGIRLTTIHNLHFIQHLMQNIRQAIREDRLLEYREDFLKVFNAG.

Catalysis depends on Asp93, which acts as the Proton acceptor. Residues Asp93–Phe97, Asp147, Gln189, and Gly216 each bind substrate. An RNA binding region spans residues Gly247–Cys253. Asp266 functions as the Nucleophile in the catalytic mechanism. Positions Thr271–Arg275 are RNA binding; important for wobble base 34 recognition. Cys304, Cys306, Cys309, and His335 together coordinate Zn(2+).

This sequence belongs to the queuine tRNA-ribosyltransferase family. In terms of assembly, homodimer. Within each dimer, one monomer is responsible for RNA recognition and catalysis, while the other monomer binds to the replacement base PreQ1. Zn(2+) is required as a cofactor.

It carries out the reaction 7-aminomethyl-7-carbaguanine + guanosine(34) in tRNA = 7-aminomethyl-7-carbaguanosine(34) in tRNA + guanine. It participates in tRNA modification; tRNA-queuosine biosynthesis. Catalyzes the base-exchange of a guanine (G) residue with the queuine precursor 7-aminomethyl-7-deazaguanine (PreQ1) at position 34 (anticodon wobble position) in tRNAs with GU(N) anticodons (tRNA-Asp, -Asn, -His and -Tyr). Catalysis occurs through a double-displacement mechanism. The nucleophile active site attacks the C1' of nucleotide 34 to detach the guanine base from the RNA, forming a covalent enzyme-RNA intermediate. The proton acceptor active site deprotonates the incoming PreQ1, allowing a nucleophilic attack on the C1' of the ribose to form the product. After dissociation, two additional enzymatic reactions on the tRNA convert PreQ1 to queuine (Q), resulting in the hypermodified nucleoside queuosine (7-(((4,5-cis-dihydroxy-2-cyclopenten-1-yl)amino)methyl)-7-deazaguanosine). The polypeptide is Queuine tRNA-ribosyltransferase (Desulforamulus reducens (strain ATCC BAA-1160 / DSM 100696 / MI-1) (Desulfotomaculum reducens)).